The primary structure comprises 344 residues: Secreted LysM effector LysM2 (344 aa).

Residues 1 to 24 (MMAPKSLQTGLLILLLAKLKLAWG) form the signal peptide. In terms of domain architecture, LysM 1 spans 36–80 (YEAAASSGDTCTSFAAEWGLTEETFASLNPSAACPSLVAGQNYCM). Low complexity predominate over residues 88–134 (STTSSSSSTTSSSTTSSSTTSSSTTSSSTTTSSFTTTTASETTSTAA). The tract at residues 88–141 (STTSSSSSTTSSSTTSSSTTSSSTTSSSTTTSSFTTTTASETTSTAANGVTTPM) is disordered. 3 LysM domains span residues 153-199 (KFDL…YVCV), 216-262 (KFDL…YVCV), and 296-342 (KFWL…YICV).

This sequence belongs to the secreted LysM effector family.

In terms of biological role, might have a role in sequestration of chitin oligosaccharides (breakdown products of fungal cell walls that are released during invasion and act as triggers of host immunity) to dampen host defense. This chain is Secreted LysM effector LysM2, found in Penicillium expansum (Blue mold rot fungus).